Reading from the N-terminus, the 473-residue chain is Zinc finger and SCAN domain-containing protein 21 (473 aa).

A Glycyl lysine isopeptide (Lys-Gly) (interchain with G-Cter in SUMO2) cross-link involves residue K27. Residues 45-127 (RQRFRQFGYH…TLLEDLEREL (83 aa)) form the SCAN box domain. Residues 127–169 (LDEPGHQVSTPPNEQKPVWEKISSSGTAKESPSSMQPQPLETS) form a disordered region. Positions 148-167 (ISSSGTAKESPSSMQPQPLE) are enriched in polar residues. Residues K221 and K232 each participate in a glycyl lysine isopeptide (Lys-Gly) (interchain with G-Cter in SUMO2) cross-link. The interval 244-272 (LENEKGTKPPLQEAGSKKGRESVPTKPTP) is disordered. Basic and acidic residues predominate over residues 258–272 (GSKKGRESVPTKPTP). C2H2-type zinc fingers lie at residues 277–299 (YICAECGKAFSNSSNLTKHRRTH), 305–327 (YVCTKCGKAFSHSSNLTLHYRTH), 333–354 (YDCKCGKAFGQSSDLLKHQRMH), 360–382 (YQCKDCGKAFSGKGSLIRHYRIH), 388–410 (YQCNECGKSFSQHAGLSSHQRLH), 416–438 (YKCKECGKAFNHSSNFNKHHRIH), and 444–466 (YWCHHCGKTFCSKSNLSKHQRVH). Residue K349 forms a Glycyl lysine isopeptide (Lys-Gly) (interchain with G-Cter in SUMO2) linkage.

Belongs to the krueppel C2H2-type zinc-finger protein family.

The protein resides in the nucleus. Its function is as follows. Strong transcriptional activator. Plays an important role in spermatogenesis; essential for the progression of meiotic prophase I in spermatocytes. The chain is Zinc finger and SCAN domain-containing protein 21 (ZSCAN21) from Homo sapiens (Human).